Consider the following 935-residue polypeptide: Probable mediator of RNA polymerase II transcription subunit 15c (935 aa).

The segment covering 1 to 13 has biased composition (polar residues); sequence MEGNTNWKPNEQG. Disordered regions lie at residues 1 to 28, 170 to 190, 495 to 526, 548 to 611, and 635 to 654; these read MEGN…WRSQ, NLPT…VSSS, SSVQ…HQMQ, QQVS…PVPG, and SSSK…PPEP. Low complexity predominate over residues 511–526; that stretch reads MQQQQPQQGNHQHQMQ. 2 stretches are compositionally biased toward polar residues: residues 548-577 and 635-644; these read QQVS…SPQL and SSSKLGTQET.

The protein belongs to the plant Mediator complex subunit 15 family. As to quaternary structure, component of the Mediator complex.

It is found in the nucleus. In terms of biological role, component of the Mediator complex, a coactivator involved in the regulated transcription of nearly all RNA polymerase II-dependent genes. Mediator functions as a bridge to convey information from gene-specific regulatory proteins to the basal RNA polymerase II transcription machinery. The Mediator complex, having a compact conformation in its free form, is recruited to promoters by direct interactions with regulatory proteins and serves for the assembly of a functional preinitiation complex with RNA polymerase II and the general transcription factors. The chain is Probable mediator of RNA polymerase II transcription subunit 15c (MED15C) from Arabidopsis thaliana (Mouse-ear cress).